The following is a 665-amino-acid chain: tRNA 5-methylaminomethyl-2-thiouridine biosynthesis bifunctional protein MnmC (665 aa).

Positions 1–243 (MSQTSLHHAR…KREMLAGERA (243 aa)) are tRNA (mnm(5)s(2)U34)-methyltransferase. Residues 268–665 (IGGGIASAMT…RKLLKGKPLQ (398 aa)) form an FAD-dependent cmnm(5)s(2)U34 oxidoreductase region.

In the N-terminal section; belongs to the methyltransferase superfamily. tRNA (mnm(5)s(2)U34)-methyltransferase family. It in the C-terminal section; belongs to the DAO family. The cofactor is FAD.

Its subcellular location is the cytoplasm. The enzyme catalyses 5-aminomethyl-2-thiouridine(34) in tRNA + S-adenosyl-L-methionine = 5-methylaminomethyl-2-thiouridine(34) in tRNA + S-adenosyl-L-homocysteine + H(+). Its function is as follows. Catalyzes the last two steps in the biosynthesis of 5-methylaminomethyl-2-thiouridine (mnm(5)s(2)U) at the wobble position (U34) in tRNA. Catalyzes the FAD-dependent demodification of cmnm(5)s(2)U34 to nm(5)s(2)U34, followed by the transfer of a methyl group from S-adenosyl-L-methionine to nm(5)s(2)U34, to form mnm(5)s(2)U34. The sequence is that of tRNA 5-methylaminomethyl-2-thiouridine biosynthesis bifunctional protein MnmC from Aeromonas hydrophila subsp. hydrophila (strain ATCC 7966 / DSM 30187 / BCRC 13018 / CCUG 14551 / JCM 1027 / KCTC 2358 / NCIMB 9240 / NCTC 8049).